The chain runs to 289 residues: Protoheme IX farnesyltransferase (289 aa).

A run of 9 helical transmembrane segments spans residues Leu13–Ala33, Val40–Phe60, Ile85–Leu105, Leu111–Phe131, Asn139–Gly159, Ile168–Leu188, Ser212–Pro232, Met234–Tyr254, and Phe269–Ile289.

Belongs to the UbiA prenyltransferase family. Protoheme IX farnesyltransferase subfamily.

The protein resides in the cell inner membrane. The enzyme catalyses heme b + (2E,6E)-farnesyl diphosphate + H2O = Fe(II)-heme o + diphosphate. It participates in porphyrin-containing compound metabolism; heme O biosynthesis; heme O from protoheme: step 1/1. Converts heme B (protoheme IX) to heme O by substitution of the vinyl group on carbon 2 of heme B porphyrin ring with a hydroxyethyl farnesyl side group. This is Protoheme IX farnesyltransferase from Leptospira borgpetersenii serovar Hardjo-bovis (strain JB197).